Consider the following 162-residue polypeptide: ATP synthase subunit b 1 (162 aa).

Residues 3-23 form a helical membrane-spanning segment; sequence FLDATFFAFVGLVLFLALVVY.

The protein belongs to the ATPase B chain family. As to quaternary structure, F-type ATPases have 2 components, F(1) - the catalytic core - and F(0) - the membrane proton channel. F(1) has five subunits: alpha(3), beta(3), gamma(1), delta(1), epsilon(1). F(0) has three main subunits: a(1), b(2) and c(10-14). The alpha and beta chains form an alternating ring which encloses part of the gamma chain. F(1) is attached to F(0) by a central stalk formed by the gamma and epsilon chains, while a peripheral stalk is formed by the delta and b chains.

It localises to the cell inner membrane. Functionally, f(1)F(0) ATP synthase produces ATP from ADP in the presence of a proton or sodium gradient. F-type ATPases consist of two structural domains, F(1) containing the extramembraneous catalytic core and F(0) containing the membrane proton channel, linked together by a central stalk and a peripheral stalk. During catalysis, ATP synthesis in the catalytic domain of F(1) is coupled via a rotary mechanism of the central stalk subunits to proton translocation. Its function is as follows. Component of the F(0) channel, it forms part of the peripheral stalk, linking F(1) to F(0). The chain is ATP synthase subunit b 1 from Rhizobium johnstonii (strain DSM 114642 / LMG 32736 / 3841) (Rhizobium leguminosarum bv. viciae).